The chain runs to 412 residues: AT-rich interactive domain-containing protein 3C (412 aa).

Residues 1 to 23 show a composition bias toward low complexity; the sequence is MEALQKQQAARLAQGVGPLAPAC. The disordered stretch occupies residues 1–96; sequence MEALQKQQAA…SSQPPGLHPH (96 aa). The span at 50–73 shows a compositional bias: acidic residues; sequence AEEEEDAEEDEEKREEAGAEEEAA. The span at 78-87 shows a compositional bias: low complexity; it reads PGAQGPSSPS. The ARID domain occupies 113–205; the sequence is DPKRKEFLDD…YLYPYECETR (93 aa). Disordered regions lie at residues 232-278 and 388-412; these read TPLF…AHAC and PVPA…SILP. Residues 259–272 are compositionally biased toward polar residues; that stretch reads TQSSPGPAQGSTSG. Residues 304–389 form the REKLES domain; that stretch reads LALGPTREKL…GVLFARRQPV (86 aa).

In terms of assembly, interacts (via REKLES DOMAIN) with NPM1; the interaction mediates ARID3C nuclear shuttling.

The protein localises to the nucleus. Functionally, transcription factor involved in monocyte-to-macrophage differentiation. Forms a complex with NPM1 to translocate to the nucleus, acting as a transcription factor that promotes the expression of the genes involved in macrophage differentiation, such as STAT3, STAT1 and JUNB. This chain is AT-rich interactive domain-containing protein 3C, found in Homo sapiens (Human).